We begin with the raw amino-acid sequence, 525 residues long: Glutamate--cysteine ligase (525 aa).

It belongs to the glutamate--cysteine ligase type 1 family. Type 1 subfamily.

The enzyme catalyses L-cysteine + L-glutamate + ATP = gamma-L-glutamyl-L-cysteine + ADP + phosphate + H(+). It functions in the pathway sulfur metabolism; glutathione biosynthesis; glutathione from L-cysteine and L-glutamate: step 1/2. The protein is Glutamate--cysteine ligase of Vibrio vulnificus (strain YJ016).